The chain runs to 168 residues: Disulfide bond formation protein B (168 aa).

The Cytoplasmic portion of the chain corresponds to 1–13 (MFLTYFDAMPRRV). The helical transmembrane segment at 14–30 (LALVSLACVALLAFGLY) threads the bilayer. The Periplasmic portion of the chain corresponds to 31 to 48 (LQHVVGLEPCPMCIVQRY). Cys40 and Cys43 form a disulfide bridge. Residues 49-64 (ALVLVAVVAGITAVAK) traverse the membrane as a helical segment. Topologically, residues 65–70 (SRGLLI) are cytoplasmic. The chain crosses the membrane as a helical span at residues 71–88 (TGSGLLVLLSGFGAFVAA). Residues 89 to 144 (RQSFLQWYPPEVASCGRDFYGMIETFPLKRAIPMIFKGSGDCTKIDWTFLGLSIAN) lie on the Periplasmic side of the membrane. A disulfide bridge connects residues Cys103 and Cys130. Residues 145–163 (WSFLCFVAIALVGLVLITR) form a helical membrane-spanning segment. Topologically, residues 164 to 168 (LARQR) are cytoplasmic.

Belongs to the DsbB family.

The protein localises to the cell inner membrane. Functionally, required for disulfide bond formation in some periplasmic proteins. Acts by oxidizing the DsbA protein. The sequence is that of Disulfide bond formation protein B from Polaromonas sp. (strain JS666 / ATCC BAA-500).